A 545-amino-acid polypeptide reads, in one-letter code: Cytochrome P450 monooxygenase 212 (545 aa).

Positions 1 to 14 are cleaved as a signal peptide; sequence MAAYAWLYCALALG. Heme is bound at residue Cys486.

Belongs to the cytochrome P450 family. Heme is required as a cofactor.

The protein operates within secondary metabolite biosynthesis. In terms of biological role, cytochrome P450 monooxygenase that is able to use anthracene and pyrene as substrates for oxidation. The chain is Cytochrome P450 monooxygenase 212 from Postia placenta (strain ATCC 44394 / Madison 698-R) (Brown rot fungus).